Here is a 395-residue protein sequence, read N- to C-terminus: Putative transcription factor 079L (395 aa).

This sequence belongs to the IIV-6 282R family.

In terms of biological role, transcription activation. The protein is Putative transcription factor 079L of Aedes vexans (Inland floodwater mosquito).